A 118-amino-acid chain; its full sequence is 5-hydroxyisourate hydrolase (118 aa).

The substrate site is built by His-7, Arg-46, and Tyr-115.

The protein belongs to the transthyretin family. 5-hydroxyisourate hydrolase subfamily. As to quaternary structure, homotetramer.

It carries out the reaction 5-hydroxyisourate + H2O = 5-hydroxy-2-oxo-4-ureido-2,5-dihydro-1H-imidazole-5-carboxylate + H(+). Its function is as follows. Catalyzes the hydrolysis of 5-hydroxyisourate (HIU) to 2-oxo-4-hydroxy-4-carboxy-5-ureidoimidazoline (OHCU). The polypeptide is 5-hydroxyisourate hydrolase (Brucella melitensis biotype 1 (strain ATCC 23456 / CCUG 17765 / NCTC 10094 / 16M)).